The chain runs to 366 residues: NAD(P)H-quinone oxidoreductase subunit 1, chloroplastic (366 aa).

7 helical membrane-spanning segments follow: residues Ile-28–Ile-48, Ile-105–Leu-125, Leu-128–Met-148, Ser-250–Leu-270, Phe-271–Ile-291, Ile-303–Ile-323, and Phe-346–Leu-366.

This sequence belongs to the complex I subunit 1 family. As to quaternary structure, NDH is composed of at least 16 different subunits, 5 of which are encoded in the nucleus.

It is found in the plastid. The protein localises to the chloroplast thylakoid membrane. The enzyme catalyses a plastoquinone + NADH + (n+1) H(+)(in) = a plastoquinol + NAD(+) + n H(+)(out). It carries out the reaction a plastoquinone + NADPH + (n+1) H(+)(in) = a plastoquinol + NADP(+) + n H(+)(out). Its function is as follows. NDH shuttles electrons from NAD(P)H:plastoquinone, via FMN and iron-sulfur (Fe-S) centers, to quinones in the photosynthetic chain and possibly in a chloroplast respiratory chain. The immediate electron acceptor for the enzyme in this species is believed to be plastoquinone. Couples the redox reaction to proton translocation, and thus conserves the redox energy in a proton gradient. The sequence is that of NAD(P)H-quinone oxidoreductase subunit 1, chloroplastic from Nandina domestica (Heavenly bamboo).